The sequence spans 214 residues: Probable chemoreceptor glutamine deamidase CheD (214 aa).

Belongs to the CheD family.

It catalyses the reaction L-glutaminyl-[protein] + H2O = L-glutamyl-[protein] + NH4(+). In terms of biological role, probably deamidates glutamine residues to glutamate on methyl-accepting chemotaxis receptors (MCPs), playing an important role in chemotaxis. The sequence is that of Probable chemoreceptor glutamine deamidase CheD from Vibrio vulnificus (strain YJ016).